A 530-amino-acid chain; its full sequence is Bifunctional purine biosynthesis protein PurH (530 aa).

One can recognise an MGS-like domain in the interval 1–148 (MNNARPIRRA…KNHKDVTIVV (148 aa)).

Belongs to the PurH family.

It carries out the reaction (6R)-10-formyltetrahydrofolate + 5-amino-1-(5-phospho-beta-D-ribosyl)imidazole-4-carboxamide = 5-formamido-1-(5-phospho-D-ribosyl)imidazole-4-carboxamide + (6S)-5,6,7,8-tetrahydrofolate. It catalyses the reaction IMP + H2O = 5-formamido-1-(5-phospho-D-ribosyl)imidazole-4-carboxamide. It participates in purine metabolism; IMP biosynthesis via de novo pathway; 5-formamido-1-(5-phospho-D-ribosyl)imidazole-4-carboxamide from 5-amino-1-(5-phospho-D-ribosyl)imidazole-4-carboxamide (10-formyl THF route): step 1/1. Its pathway is purine metabolism; IMP biosynthesis via de novo pathway; IMP from 5-formamido-1-(5-phospho-D-ribosyl)imidazole-4-carboxamide: step 1/1. The sequence is that of Bifunctional purine biosynthesis protein PurH from Vibrio atlanticus (strain LGP32) (Vibrio splendidus (strain Mel32)).